The chain runs to 49 residues: Photosystem I reaction center subunit IX (49 aa).

Residues 14–34 form a helical membrane-spanning segment; the sequence is FISTAPVAATIWLTITAGILI.

This sequence belongs to the PsaJ family.

The protein resides in the cellular thylakoid membrane. In terms of biological role, may help in the organization of the PsaE and PsaF subunits. In Nostoc punctiforme (strain ATCC 29133 / PCC 73102), this protein is Photosystem I reaction center subunit IX.